Reading from the N-terminus, the 234-residue chain is 2,3,4,5-tetrahydropyridine-2,6-dicarboxylate N-acetyltransferase (234 aa).

The protein belongs to the transferase hexapeptide repeat family. DapH subfamily.

The enzyme catalyses (S)-2,3,4,5-tetrahydrodipicolinate + acetyl-CoA + H2O = L-2-acetamido-6-oxoheptanedioate + CoA. It participates in amino-acid biosynthesis; L-lysine biosynthesis via DAP pathway; LL-2,6-diaminopimelate from (S)-tetrahydrodipicolinate (acetylase route): step 1/3. In terms of biological role, catalyzes the transfer of an acetyl group from acetyl-CoA to tetrahydrodipicolinate. The sequence is that of 2,3,4,5-tetrahydropyridine-2,6-dicarboxylate N-acetyltransferase from Leuconostoc citreum (strain KM20).